The chain runs to 313 residues: tRNA dimethylallyltransferase (313 aa).

ATP is bound at residue 10–17 (GPTAVGKS). 12–17 (TAVGKS) serves as a coordination point for substrate. The tract at residues 35–38 (DSTQ) is interaction with substrate tRNA.

This sequence belongs to the IPP transferase family. As to quaternary structure, monomer. It depends on Mg(2+) as a cofactor.

It carries out the reaction adenosine(37) in tRNA + dimethylallyl diphosphate = N(6)-dimethylallyladenosine(37) in tRNA + diphosphate. In terms of biological role, catalyzes the transfer of a dimethylallyl group onto the adenine at position 37 in tRNAs that read codons beginning with uridine, leading to the formation of N6-(dimethylallyl)adenosine (i(6)A). This chain is tRNA dimethylallyltransferase, found in Oceanobacillus iheyensis (strain DSM 14371 / CIP 107618 / JCM 11309 / KCTC 3954 / HTE831).